The chain runs to 474 residues: MTQKLHIKTWGCQMNEYDSSKMADLLLSTHGLELTEAPEEADVLLLNTCSIREKAQEKVFHQLGRWKELKKNNPNLVIGVGGCVASQEGEHIRHRAPYVDIIFGPQTLHRLPEMINQIRGGKSSVVDVSFPEIEKFDRLPEPRAEGPTAFVSIMEGCNKYCTFCVVPYTRGEEVSRPVDDVLFEIAQLAEQGVREVNLLGQNVNAYRGPTHDGQICSFAELLRLVASIDGIDRLRFTTSHPIEFTDDIIDVYRDTPELVSFLHLPVQAGSDRVLTMMKRAHTALEYKSIIRKLRAVRPDIQISSDFIVGFPGETAEDFEQTMNLIAQVNFDMSFSFVYSARPGTPAADMPDDVTEDEKKQRLYVLQERINQQAAQFSRRMLGTEQRVLVEGPSKKDIMELTGRTETNRIVNFQGSPEMIGKFVDVKITDVYTNSLRGEVVRTEDEMGLRIAQSPQEVMNRTRKEDELGVGRYHG.

The MTTase N-terminal domain occupies 3-120 (QKLHIKTWGC…LPEMINQIRG (118 aa)). Residues C12, C49, C83, C157, C161, and C164 each coordinate [4Fe-4S] cluster. The 233-residue stretch at 143 to 375 (RAEGPTAFVS…QERINQQAAQ (233 aa)) folds into the Radical SAM core domain. In terms of domain architecture, TRAM spans 378–441 (RRMLGTEQRV…TNSLRGEVVR (64 aa)).

Belongs to the methylthiotransferase family. MiaB subfamily. As to quaternary structure, monomer. [4Fe-4S] cluster serves as cofactor.

The protein localises to the cytoplasm. The catalysed reaction is N(6)-dimethylallyladenosine(37) in tRNA + (sulfur carrier)-SH + AH2 + 2 S-adenosyl-L-methionine = 2-methylsulfanyl-N(6)-dimethylallyladenosine(37) in tRNA + (sulfur carrier)-H + 5'-deoxyadenosine + L-methionine + A + S-adenosyl-L-homocysteine + 2 H(+). Catalyzes the methylthiolation of N6-(dimethylallyl)adenosine (i(6)A), leading to the formation of 2-methylthio-N6-(dimethylallyl)adenosine (ms(2)i(6)A) at position 37 in tRNAs that read codons beginning with uridine. This is tRNA-2-methylthio-N(6)-dimethylallyladenosine synthase from Haemophilus influenzae (strain PittGG).